Here is an 85-residue protein sequence, read N- to C-terminus: Cell division protein ZapA (85 aa).

The stretch at 59–85 (TAVNVVHDYMKLQEKYEILERQLKEKE) forms a coiled coil.

Belongs to the ZapA family. Type 2 subfamily. As to quaternary structure, homodimer. Interacts with FtsZ.

It is found in the cytoplasm. Activator of cell division through the inhibition of FtsZ GTPase activity, therefore promoting FtsZ assembly into bundles of protofilaments necessary for the formation of the division Z ring. It is recruited early at mid-cell but it is not essential for cell division. The protein is Cell division protein ZapA of Bacillus velezensis (strain DSM 23117 / BGSC 10A6 / LMG 26770 / FZB42) (Bacillus amyloliquefaciens subsp. plantarum).